Reading from the N-terminus, the 166-residue chain is 2-C-methyl-D-erythritol 2,4-cyclodiphosphate synthase (166 aa).

A divalent metal cation is bound by residues D17 and H19. 4-CDP-2-C-methyl-D-erythritol 2-phosphate contacts are provided by residues 17–19 (DSH) and 43–44 (HS). Residue H51 coordinates a divalent metal cation. 4-CDP-2-C-methyl-D-erythritol 2-phosphate is bound by residues 65 to 67 (DIG), 109 to 115 (AQKPKMA), and R151.

The protein belongs to the IspF family. Homotrimer. Requires a divalent metal cation as cofactor.

It carries out the reaction 4-CDP-2-C-methyl-D-erythritol 2-phosphate = 2-C-methyl-D-erythritol 2,4-cyclic diphosphate + CMP. It functions in the pathway isoprenoid biosynthesis; isopentenyl diphosphate biosynthesis via DXP pathway; isopentenyl diphosphate from 1-deoxy-D-xylulose 5-phosphate: step 4/6. Its function is as follows. Involved in the biosynthesis of isopentenyl diphosphate (IPP) and dimethylallyl diphosphate (DMAPP), two major building blocks of isoprenoid compounds. Catalyzes the conversion of 4-diphosphocytidyl-2-C-methyl-D-erythritol 2-phosphate (CDP-ME2P) to 2-C-methyl-D-erythritol 2,4-cyclodiphosphate (ME-CPP) with a corresponding release of cytidine 5-monophosphate (CMP). The polypeptide is 2-C-methyl-D-erythritol 2,4-cyclodiphosphate synthase (Rhodopirellula baltica (strain DSM 10527 / NCIMB 13988 / SH1)).